The chain runs to 979 residues: UPF0182 protein BCG_0095 (979 aa).

The next 7 helical transmembrane spans lie at 19 to 39, 63 to 83, 114 to 134, 174 to 194, 211 to 231, 260 to 280, and 288 to 308; these read LVTA…LVDI, LAIV…ALLL, LFGW…ASFD, WLFV…YLFG, VQLA…YWLD, KLVL…AIFL, and MAAA…PLLM. Residues 898-948 form a disordered region; sequence GTGRVATAPGGDAASAPPPGAGGPAPPQAVPPPRTTQPPAAPPRGPDVPPA. Residues 902–912 show a composition bias toward low complexity; that stretch reads VATAPGGDAAS. The segment covering 913-946 has biased composition (pro residues); the sequence is APPPGAGGPAPPQAVPPPRTTQPPAAPPRGPDVP.

The protein belongs to the UPF0182 family.

It is found in the cell membrane. This is UPF0182 protein BCG_0095 from Mycobacterium bovis (strain BCG / Pasteur 1173P2).